The sequence spans 111 residues: Cryptic phage CTXphi transcriptional repressor RstR (111 aa).

One can recognise an HTH cro/C1-type domain in the interval 6–60 (IRDLRVERDLNQEEVANGIGVGKNTYLAYEKGTQSPKLETVEKLAKFYGVPIAEL). The segment at residues 17 to 36 (QEEVANGIGVGKNTYLAYEK) is a DNA-binding region (H-T-H motif).

Transcriptional repressor of the integrated CTXPhi phage gene rstA2. The chain is Cryptic phage CTXphi transcriptional repressor RstR (rstR) from Vibrio cholerae.